Here is a 159-residue protein sequence, read N- to C-terminus: SsrA-binding protein (159 aa).

Residues 134-159 are disordered; sequence KLHDKRETSKERDWNRQKNRLLKERG. The span at 137–159 shows a compositional bias: basic and acidic residues; it reads DKRETSKERDWNRQKNRLLKERG.

The protein belongs to the SmpB family.

It localises to the cytoplasm. Functionally, required for rescue of stalled ribosomes mediated by trans-translation. Binds to transfer-messenger RNA (tmRNA), required for stable association of tmRNA with ribosomes. tmRNA and SmpB together mimic tRNA shape, replacing the anticodon stem-loop with SmpB. tmRNA is encoded by the ssrA gene; the 2 termini fold to resemble tRNA(Ala) and it encodes a 'tag peptide', a short internal open reading frame. During trans-translation Ala-aminoacylated tmRNA acts like a tRNA, entering the A-site of stalled ribosomes, displacing the stalled mRNA. The ribosome then switches to translate the ORF on the tmRNA; the nascent peptide is terminated with the 'tag peptide' encoded by the tmRNA and targeted for degradation. The ribosome is freed to recommence translation, which seems to be the essential function of trans-translation. The sequence is that of SsrA-binding protein from Sinorhizobium fredii (strain NBRC 101917 / NGR234).